A 147-amino-acid polypeptide reads, in one-letter code: Peptide methionine sulfoxide reductase MsrB (147 aa).

Residues 8 to 131 (KEELKKVLTE…NSASLKFIPK (124 aa)) enclose the MsrB domain. The active-site Nucleophile is cysteine 120.

It belongs to the MsrB Met sulfoxide reductase family.

It carries out the reaction L-methionyl-[protein] + [thioredoxin]-disulfide + H2O = L-methionyl-(R)-S-oxide-[protein] + [thioredoxin]-dithiol. This is Peptide methionine sulfoxide reductase MsrB from Clostridium perfringens (strain ATCC 13124 / DSM 756 / JCM 1290 / NCIMB 6125 / NCTC 8237 / Type A).